We begin with the raw amino-acid sequence, 604 residues long: MCGIVGVVGNTNATDILIQGLEKLEYRGYDSAGIFVVGDNKSQLVKSVGRIAEIQAKVGDSVSGTTGIGHTRWATHGKPTEGNAHPHTSGSGRFVLVHNGVIENYLQIKETYLTKHNLKGETDTEIAIHLVEHFVEEDNLSVLEAFKKALHIIEGSYAFALIDSQDADTIYVAKNKSPLLIGLGNGYNMVCSDAMAMIRETSEYMEIHDKELVIVKKDSVEVQDYDGNVIERGSYTAELDLSDIGKGTYPFYMLKEIDEQPTVMRKLISTYANESGDMNVDSDIIKSVQEADRLYILAAGTSYHAGFAAKTMIEKLTDTPVELGVSSEWGYNMPLLSKKPMFILLSQSGETADSRQVLVKANEMGIPSLTITNVPGSTLSREATYTMLIHAGPEIAVASTKAYTAQVATLAFLAKAVGEANGKAEAKDFDLVHELSIVAQSIEATLSEKDVISEKVEQLLISTRNAFYIGRGNDYYVTMEAALKLKEISYIQTEGFAAGELKHGTISLIEDNTPVIALISADSTIAAHTRGNIQEVVSRGANALIIVEEGLEREGDDIIVNKVHPFLSAISMVIPTQLIAYYASLQRGLDVDKPRNLAKAVTVE.

Catalysis depends on cysteine 2, which acts as the Nucleophile; for GATase activity. One can recognise a Glutamine amidotransferase type-2 domain in the interval 2 to 218 (CGIVGVVGNT…DKELVIVKKD (217 aa)). 2 consecutive SIS domains span residues 284–423 (IIKS…ANGK) and 456–594 (VEQL…VDKP). The active-site For Fru-6P isomerization activity is lysine 599.

In terms of assembly, homodimer.

It is found in the cytoplasm. The enzyme catalyses D-fructose 6-phosphate + L-glutamine = D-glucosamine 6-phosphate + L-glutamate. In terms of biological role, catalyzes the first step in hexosamine metabolism, converting fructose-6P into glucosamine-6P using glutamine as a nitrogen source. This Streptococcus agalactiae serotype V (strain ATCC BAA-611 / 2603 V/R) protein is Glutamine--fructose-6-phosphate aminotransferase [isomerizing].